A 343-amino-acid chain; its full sequence is Squamosa promoter-binding-like protein 11 (343 aa).

The segment at 1–48 (MECNPVSSTTSSSLLWDWDATASAEPPPPPGKRGGRDSSSASASAKRG) is disordered. Low complexity-rich tracts occupy residues 7–19 (SSTT…WDWD) and 37–48 (DSSSASASAKRG). An SBP-type zinc finger spans residues 64–141 (APRCQVEGCG…SDHNARRRKP (78 aa)). Residues Cys67, Cys72, Cys89, His92, Cys108, Cys111, His115, and Cys127 each coordinate Zn(2+). A Bipartite nuclear localization signal motif is present at residues 124–140 (KRSCRRRLSDHNARRRK).

Expressed in stems, leaf sheaths, and young panicles.

It is found in the nucleus. Trans-acting factor that binds specifically to the consensus nucleotide sequence 5'-TNCGTACAA-3'. May be involved in panicle development. The protein is Squamosa promoter-binding-like protein 11 (SPL11) of Oryza sativa subsp. japonica (Rice).